The chain runs to 936 residues: Protocadherin alpha-5 (936 aa).

A signal peptide spans 1-28 (MVYSRRGSLGSRLLLLWLLLAYWKAGSG). At 29 to 696 (QLHYSIPEEA…GPEAALVDVN (668 aa)) the chain is on the extracellular side. Cadherin domains lie at 33 to 132 (SIPE…PPRF), 156 to 241 (ASDL…APEF), 242 to 349 (DKSI…TPEM), 350 to 454 (AITT…APAF), 455 to 564 (AQPQ…APAL), and 580 to 677 (VPRS…APKA). N-linked (GlcNAc...) asparagine glycosylation is present at asparagine 264. An N-linked (GlcNAc...) asparagine glycan is attached at asparagine 547. The helical transmembrane segment at 697–717 (VYLIIAICAVSSLLVLTLLLY) threads the bilayer. Residues 718–936 (TALRCSAQPT…GNSTTDNSDQ (219 aa)) lie on the Cytoplasmic side of the membrane. Disordered regions lie at residues 759 to 793 (SGEAPPKTDLMAFSPSLPQGPTSTDNPRQPNPDWR) and 816 to 936 (AGPG…NSDQ). PXXP repeat units follow at residues 773-776 (PSLP), 785-788 (PRQP), 818-821 (PGGP), 873-876 (KFII), and 877-890 (PGSPAIISIRQEPT). The 5 X 4 AA repeats of P-X-X-P stretch occupies residues 773–890 (PSLPQGPTST…AIISIRQEPT (118 aa)). A compositionally biased stretch (polar residues) spans 774–786 (SLPQGPTSTDNPR). A compositionally biased stretch (basic and acidic residues) spans 895–909 (DKSDFITFGKKEETK).

It localises to the cell membrane. Potential calcium-dependent cell-adhesion protein. May be involved in the establishment and maintenance of specific neuronal connections in the brain. The protein is Protocadherin alpha-5 (PCDHA5) of Homo sapiens (Human).